Reading from the N-terminus, the 143-residue chain is Transcriptional regulator MraZ (143 aa).

SpoVT-AbrB domains are found at residues E5 to E47 and A76 to K119.

Belongs to the MraZ family. Forms oligomers.

The protein localises to the cytoplasm. Its subcellular location is the nucleoid. The chain is Transcriptional regulator MraZ from Acetivibrio thermocellus (strain ATCC 27405 / DSM 1237 / JCM 9322 / NBRC 103400 / NCIMB 10682 / NRRL B-4536 / VPI 7372) (Clostridium thermocellum).